We begin with the raw amino-acid sequence, 406 residues long: Phosphopentomutase (406 aa).

6 residues coordinate Mn(2+): Asp-10, Asp-305, His-310, Asp-346, His-347, and His-358.

The protein belongs to the phosphopentomutase family. Requires Mn(2+) as cofactor.

The protein resides in the cytoplasm. It carries out the reaction 2-deoxy-alpha-D-ribose 1-phosphate = 2-deoxy-D-ribose 5-phosphate. The catalysed reaction is alpha-D-ribose 1-phosphate = D-ribose 5-phosphate. Its pathway is carbohydrate degradation; 2-deoxy-D-ribose 1-phosphate degradation; D-glyceraldehyde 3-phosphate and acetaldehyde from 2-deoxy-alpha-D-ribose 1-phosphate: step 1/2. In terms of biological role, isomerase that catalyzes the conversion of deoxy-ribose 1-phosphate (dRib-1-P) and ribose 1-phosphate (Rib-1-P) to deoxy-ribose 5-phosphate (dRib-5-P) and ribose 5-phosphate (Rib-5-P), respectively. In Rhizobium johnstonii (strain DSM 114642 / LMG 32736 / 3841) (Rhizobium leguminosarum bv. viciae), this protein is Phosphopentomutase.